A 734-amino-acid polypeptide reads, in one-letter code: DNA replication licensing factor MCM5 (734 aa).

Ser2 carries the N-acetylserine modification. Residue Ser315 is modified to Phosphoserine. Positions Val331–Ile537 constitute an MCM domain. Arg371 provides a ligand contact to ADP. 2 positions are modified to N6-acetyllysine: Lys392 and Lys396. A Phosphoserine modification is found at Ser605. The residue at position 696 (Lys696) is an N6-acetyllysine.

The protein belongs to the MCM family. In terms of assembly, component of the MCM2-7 complex. The complex forms a toroidal hexameric ring with the proposed subunit order MCM2-MCM6-MCM4-MCM7-MCM3-MCM5. Component of the CMG helicase complex, a hexameric ring of related MCM2-7 subunits stabilized by CDC45 and the tetrameric GINS complex. Interacts with ANKRD17. Interacts with MCMBP. Interacts with TONSL; the interaction is direct.

The protein localises to the nucleus. It is found in the chromosome. It catalyses the reaction ATP + H2O = ADP + phosphate + H(+). In terms of biological role, acts as a component of the MCM2-7 complex (MCM complex) which is the replicative helicase essential for 'once per cell cycle' DNA replication initiation and elongation in eukaryotic cells. Core component of CDC45-MCM-GINS (CMG) helicase, the molecular machine that unwinds template DNA during replication, and around which the replisome is built. The active ATPase sites in the MCM2-7 ring are formed through the interaction surfaces of two neighboring subunits such that a critical structure of a conserved arginine finger motif is provided in trans relative to the ATP-binding site of the Walker A box of the adjacent subunit. The six ATPase active sites, however, are likely to contribute differentially to the complex helicase activity. This chain is DNA replication licensing factor MCM5 (MCM5), found in Homo sapiens (Human).